The following is a 141-amino-acid chain: Nucleoside triphosphatase NudI (141 aa).

The Nudix hydrolase domain maps to 1 to 141 (MRQRTIVCPL…RKTLRLKGLL (141 aa)). The short motif at 38–59 (GGVESGERIEEALRREIREELG) is the Nudix box element.

Belongs to the Nudix hydrolase family. NudI subfamily. As to quaternary structure, monomer. Mg(2+) is required as a cofactor.

It catalyses the reaction a ribonucleoside 5'-triphosphate + H2O = a ribonucleoside 5'-phosphate + diphosphate + H(+). The enzyme catalyses a 2'-deoxyribonucleoside 5'-triphosphate + H2O = a 2'-deoxyribonucleoside 5'-phosphate + diphosphate + H(+). It carries out the reaction dUTP + H2O = dUMP + diphosphate + H(+). The catalysed reaction is dTTP + H2O = dTMP + diphosphate + H(+). It catalyses the reaction dCTP + H2O = dCMP + diphosphate + H(+). Its function is as follows. Catalyzes the hydrolysis of nucleoside triphosphates, with a preference for pyrimidine deoxynucleoside triphosphates (dUTP, dTTP and dCTP). This Shigella flexneri serotype 5b (strain 8401) protein is Nucleoside triphosphatase NudI.